Reading from the N-terminus, the 482-residue chain is tRNA sulfurtransferase (482 aa).

The region spanning 61 to 165 (AEVLEILTHT…GDKLNQVLAR (105 aa)) is the THUMP domain. ATP contacts are provided by residues 183 to 184 (LI), lysine 265, glycine 287, and glutamine 296. Cysteine 344 and cysteine 456 are disulfide-bonded. In terms of domain architecture, Rhodanese spans 404 to 482 (VEEHAVVLDI…GFNNVKVYRP (79 aa)). Cysteine 456 functions as the Cysteine persulfide intermediate in the catalytic mechanism.

The protein belongs to the ThiI family.

The protein resides in the cytoplasm. The enzyme catalyses [ThiI sulfur-carrier protein]-S-sulfanyl-L-cysteine + a uridine in tRNA + 2 reduced [2Fe-2S]-[ferredoxin] + ATP + H(+) = [ThiI sulfur-carrier protein]-L-cysteine + a 4-thiouridine in tRNA + 2 oxidized [2Fe-2S]-[ferredoxin] + AMP + diphosphate. It carries out the reaction [ThiS sulfur-carrier protein]-C-terminal Gly-Gly-AMP + S-sulfanyl-L-cysteinyl-[cysteine desulfurase] + AH2 = [ThiS sulfur-carrier protein]-C-terminal-Gly-aminoethanethioate + L-cysteinyl-[cysteine desulfurase] + A + AMP + 2 H(+). It functions in the pathway cofactor biosynthesis; thiamine diphosphate biosynthesis. Catalyzes the ATP-dependent transfer of a sulfur to tRNA to produce 4-thiouridine in position 8 of tRNAs, which functions as a near-UV photosensor. Also catalyzes the transfer of sulfur to the sulfur carrier protein ThiS, forming ThiS-thiocarboxylate. This is a step in the synthesis of thiazole, in the thiamine biosynthesis pathway. The sulfur is donated as persulfide by IscS. The polypeptide is tRNA sulfurtransferase (Vibrio parahaemolyticus serotype O3:K6 (strain RIMD 2210633)).